We begin with the raw amino-acid sequence, 556 residues long: Serine beta-lactamase-like protein LACTB, mitochondrial (556 aa).

Residues 1-117 (MYRLLSAVMA…RAIDSSRDLL (117 aa)) constitute a mitochondrion transit peptide. The Acyl-ester intermediate role is filled by Ser-166. Positions 249-282 (ESDQEKELKEKGGKSNEKNDFAKAKVEQDNETKG) are enriched in basic and acidic residues. Residues 249 to 290 (ESDQEKELKEKGGKSNEKNDFAKAKVEQDNETKGRNSKPCKK) are disordered. 2 positions are modified to N6-succinyllysine: Lys-290 and Lys-291. N6-acetyllysine is present on residues Lys-304 and Lys-349.

It belongs to the peptidase S12 family.

It is found in the mitochondrion. Mitochondrial serine protease that acts as a regulator of mitochondrial lipid metabolism. Acts by decreasing protein levels of PISD, a mitochondrial enzyme that converts phosphatidylserine (PtdSer) to phosphatidylethanolamine (PtdEtn), thereby affecting mitochondrial lipid metabolism. It is unclear whether it acts directly by mediating proteolysis of PISD or by mediating proteolysis of another lipid metabolism protein. The polypeptide is Serine beta-lactamase-like protein LACTB, mitochondrial (Bos taurus (Bovine)).